The sequence spans 404 residues: Cysteine desulfurase IscS (404 aa).

Pyridoxal 5'-phosphate contacts are provided by residues 75 to 76 (AT), N155, Q183, and 203 to 205 (SGH). K206 is subject to N6-(pyridoxal phosphate)lysine. T243 contacts pyridoxal 5'-phosphate. C328 functions as the Cysteine persulfide intermediate in the catalytic mechanism. [2Fe-2S] cluster is bound at residue C328.

The protein belongs to the class-V pyridoxal-phosphate-dependent aminotransferase family. NifS/IscS subfamily. As to quaternary structure, homodimer. Forms a heterotetramer with IscU, interacts with other sulfur acceptors. Pyridoxal 5'-phosphate serves as cofactor.

Its subcellular location is the cytoplasm. It catalyses the reaction (sulfur carrier)-H + L-cysteine = (sulfur carrier)-SH + L-alanine. Its pathway is cofactor biosynthesis; iron-sulfur cluster biosynthesis. Functionally, master enzyme that delivers sulfur to a number of partners involved in Fe-S cluster assembly, tRNA modification or cofactor biosynthesis. Catalyzes the removal of elemental sulfur and selenium atoms from cysteine and selenocysteine to produce alanine. Functions as a sulfur delivery protein for Fe-S cluster synthesis onto IscU, an Fe-S scaffold assembly protein, as well as other S acceptor proteins. Also functions as a selenium delivery protein in the pathway for the biosynthesis of selenophosphate. The chain is Cysteine desulfurase IscS from Escherichia coli (strain K12 / DH10B).